A 385-amino-acid chain; its full sequence is Succinate--CoA ligase [ADP-forming] subunit beta (385 aa).

In terms of domain architecture, ATP-grasp spans 9 to 244 (KALFRTFGVP…LDEEDPLEVE (236 aa)). ATP is bound by residues K46, 53–55 (GRG), E99, Q102, and E107. Mg(2+) is bound by residues N199 and D213. Residues N264 and 321-323 (GIL) each bind substrate.

This sequence belongs to the succinate/malate CoA ligase beta subunit family. Heterotetramer of two alpha and two beta subunits. It depends on Mg(2+) as a cofactor.

It carries out the reaction succinate + ATP + CoA = succinyl-CoA + ADP + phosphate. It catalyses the reaction GTP + succinate + CoA = succinyl-CoA + GDP + phosphate. The protein operates within carbohydrate metabolism; tricarboxylic acid cycle; succinate from succinyl-CoA (ligase route): step 1/1. Its function is as follows. Succinyl-CoA synthetase functions in the citric acid cycle (TCA), coupling the hydrolysis of succinyl-CoA to the synthesis of either ATP or GTP and thus represents the only step of substrate-level phosphorylation in the TCA. The beta subunit provides nucleotide specificity of the enzyme and binds the substrate succinate, while the binding sites for coenzyme A and phosphate are found in the alpha subunit. This Desulforapulum autotrophicum (strain ATCC 43914 / DSM 3382 / VKM B-1955 / HRM2) (Desulfobacterium autotrophicum) protein is Succinate--CoA ligase [ADP-forming] subunit beta.